The chain runs to 214 residues: High frequency lysogenization protein HflD homolog (214 aa).

The protein belongs to the HflD family.

The protein localises to the cytoplasm. It is found in the cell inner membrane. This chain is High frequency lysogenization protein HflD homolog, found in Chromohalobacter salexigens (strain ATCC BAA-138 / DSM 3043 / CIP 106854 / NCIMB 13768 / 1H11).